We begin with the raw amino-acid sequence, 168 residues long: Nicotinamide-nucleotide adenylyltransferase (168 aa).

The protein belongs to the archaeal NMN adenylyltransferase family.

It localises to the cytoplasm. It catalyses the reaction beta-nicotinamide D-ribonucleotide + ATP + H(+) = diphosphate + NAD(+). It participates in cofactor biosynthesis; NAD(+) biosynthesis; NAD(+) from nicotinamide D-ribonucleotide: step 1/1. The sequence is that of Nicotinamide-nucleotide adenylyltransferase from Methanocorpusculum labreanum (strain ATCC 43576 / DSM 4855 / Z).